Here is a 373-residue protein sequence, read N- to C-terminus: DNA replication and repair protein RecF (373 aa).

Residue 30-37 participates in ATP binding; that stretch reads GENAQGKT.

This sequence belongs to the RecF family.

Its subcellular location is the cytoplasm. In terms of biological role, the RecF protein is involved in DNA metabolism; it is required for DNA replication and normal SOS inducibility. RecF binds preferentially to single-stranded, linear DNA. It also seems to bind ATP. In Bacillus cytotoxicus (strain DSM 22905 / CIP 110041 / 391-98 / NVH 391-98), this protein is DNA replication and repair protein RecF.